Here is a 350-residue protein sequence, read N- to C-terminus: Deoxyribonuclease-2-alpha (350 aa).

The signal sequence occupies residues 1–19; it reads MAAPSSLLLAALLWVPAEA. A disulfide bridge connects residues C22 and C162. N-linked (GlcNAc...) asparagine glycosylation is found at N89, N215, N269, and N293. 2 cysteine pairs are disulfide-bonded: C270/C350 and C311/C330. Residue H298 is part of the active site.

It belongs to the DNase II family. Ubiquitous.

Its subcellular location is the lysosome. It carries out the reaction Endonucleolytic cleavage to nucleoside 3'-phosphates and 3'-phosphooligonucleotide end-products.. Functionally, hydrolyzes DNA under acidic conditions with a preference for double-stranded DNA. Plays a major role in the clearance of nucleic acids generated through apoptosis, hence preventing autoinflammation. Necessary for proper fetal development and for definitive erythropoiesis in fetal liver and bone marrow, where it degrades nuclear DNA expelled from erythroid precursor cells. This Rattus norvegicus (Rat) protein is Deoxyribonuclease-2-alpha (Dnase2).